The sequence spans 279 residues: Small ribosomal subunit protein uS2 (279 aa).

It belongs to the universal ribosomal protein uS2 family. In terms of assembly, component of the small ribosomal subunit. Mature ribosomes consist of a small (40S) and a large (60S) subunit. The 40S subunit contains about 33 different proteins and 1 molecule of RNA (18S). The 60S subunit contains about 49 different proteins and 3 molecules of RNA (28S, 5.8S and 5S). Interacts with ribosomal protein S21.

It localises to the cytoplasm. Required for the assembly and/or stability of the 40S ribosomal subunit. Required for the processing of the 20S rRNA-precursor to mature 18S rRNA in a late step of the maturation of 40S ribosomal subunits. The sequence is that of Small ribosomal subunit protein uS2 from Schistosoma japonicum (Blood fluke).